The chain runs to 316 residues: ATP synthase gamma chain (316 aa).

This sequence belongs to the ATPase gamma chain family. As to quaternary structure, F-type ATPases have 2 components, CF(1) - the catalytic core - and CF(0) - the membrane proton channel. CF(1) has five subunits: alpha(3), beta(3), gamma(1), delta(1), epsilon(1). CF(0) has three main subunits: a, b and c.

It localises to the cellular thylakoid membrane. In terms of biological role, produces ATP from ADP in the presence of a proton gradient across the membrane. The gamma chain is believed to be important in regulating ATPase activity and the flow of protons through the CF(0) complex. This Synechococcus sp. (strain CC9605) protein is ATP synthase gamma chain.